The chain runs to 378 residues: 1-acyl-sn-glycerol-3-phosphate acyltransferase delta (378 aa).

A helical transmembrane segment spans residues F11–V31. Residues H96 to D101 carry the HXXXXD motif motif. 3 helical membrane-spanning segments follow: residues E125–S145, T307–V327, and L338–V358.

Belongs to the 1-acyl-sn-glycerol-3-phosphate acyltransferase family.

The protein resides in the endoplasmic reticulum membrane. The enzyme catalyses a 1-acyl-sn-glycero-3-phosphate + an acyl-CoA = a 1,2-diacyl-sn-glycero-3-phosphate + CoA. It catalyses the reaction (4Z,7Z,10Z,13Z,16Z,19Z)-docosahexaenoyl-CoA + 1-hexadecanoyl-sn-glycero-3-phosphate = 1-hexadecanoyl-2-(4Z,7Z,10Z,13Z,16Z,19Z-docosahexaenoyl)-sn-glycero-3-phosphate + CoA. The catalysed reaction is 1-octadecanoyl-sn-glycero-3-phosphate + (9Z,12Z)-octadecadienoyl-CoA = 1-octadecanoyl-2-(9Z,12Z-octadecadienoyl)-sn-glycero-3-phosphate + CoA. It carries out the reaction 1-octadecanoyl-sn-glycero-3-phosphate + (4Z,7Z,10Z,13Z,16Z,19Z)-docosahexaenoyl-CoA = 1-octadecanoyl-2-(4Z,7Z,10Z,13Z,16Z,19Z-docosahexaenoyl)-sn-glycero-3-phosphate + CoA. The enzyme catalyses (4Z,7Z,10Z,13Z,16Z,19Z)-docosahexaenoyl-CoA + 1-(9Z-octadecenoyl)-sn-glycero-3-phosphate = 1-(9Z-octadecenoyl)-2-(4Z,7Z,10Z,13Z,16Z,19Z-docosahexaenoyl)-sn-glycero-3-phosphate + CoA. Its pathway is phospholipid metabolism; CDP-diacylglycerol biosynthesis; CDP-diacylglycerol from sn-glycerol 3-phosphate: step 2/3. Its function is as follows. Converts 1-acyl-sn-glycerol-3-phosphate (lysophosphatidic acid or LPA) into 1,2-diacyl-sn-glycerol-3-phosphate (phosphatidic acid or PA) by incorporating an acyl moiety at the sn-2 position of the glycerol backbone. Exhibits high acyl-CoA specificity for polyunsaturated fatty acyl-CoA, especially docosahexaenoyl-CoA (22:6-CoA, DHA-CoA). In Macaca fascicularis (Crab-eating macaque), this protein is 1-acyl-sn-glycerol-3-phosphate acyltransferase delta (AGPAT4).